Here is a 221-residue protein sequence, read N- to C-terminus: Large ribosomal subunit protein uL3 (221 aa).

It belongs to the universal ribosomal protein uL3 family. In terms of assembly, part of the 50S ribosomal subunit. Forms a cluster with proteins L14 and L19.

One of the primary rRNA binding proteins, it binds directly near the 3'-end of the 23S rRNA, where it nucleates assembly of the 50S subunit. In Chlamydia muridarum (strain MoPn / Nigg), this protein is Large ribosomal subunit protein uL3.